Reading from the N-terminus, the 317-residue chain is Toluene-4-sulfonate monooxygenase system reductase subunit TsaB1 (317 aa).

The FAD-binding FR-type domain maps to 2 to 108; it reads SADVPVTVAA…RATCSEMAPE (107 aa). Position 110 to 220 (110 to 220) interacts with NAD(+); sequence RRVLLLAGGI…PGSVRMERFK (111 aa). The 88-residue stretch at 230–317 folds into the 2Fe-2S ferredoxin-type domain; sequence QPFELVLQRA…CGGGRLVLDI (88 aa). The [2Fe-2S] cluster site is built by cysteine 266, cysteine 271, cysteine 274, and cysteine 304.

Monomer. Part of the p-toluenesulfonate methyl-monooxygenase complex TsaBM, comprising the reductase TsaB and the oxygenase TsaM. FMN serves as cofactor.

Functionally, iron-sulfur flavoprotein carrying electrons from NADH to the oxygenase TsaM. Involved in the toluene-4-sulfonate degradation pathway. This Comamonas testosteroni (Pseudomonas testosteroni) protein is Toluene-4-sulfonate monooxygenase system reductase subunit TsaB1 (tsaB1).